Reading from the N-terminus, the 379-residue chain is RIB43A-like with coiled-coils protein 1 (379 aa).

The interval 1 to 21 (MYNINQSTDTKEAAAIEARRN) is disordered. Positions 9–21 (DTKEAAAIEARRN) are enriched in basic and acidic residues. 3 coiled-coil regions span residues 85 to 111 (ADRT…GREF), 161 to 241 (RYNL…KANL), and 280 to 304 (EQRA…QAEK).

The protein belongs to the RIB43A family. Microtubule inner protein component of sperm flagellar doublet microtubules.

It localises to the cytoplasm. The protein resides in the cytoskeleton. The protein localises to the flagellum axoneme. The sequence is that of RIB43A-like with coiled-coils protein 1 (RIBC1) from Macaca fascicularis (Crab-eating macaque).